The sequence spans 360 residues: G-protein coupled receptor 15 (360 aa).

At 1–33 (MDPEETSVYLDYYYATSPNPDIRETHSHVPYTS) the chain is on the extracellular side. The chain crosses the membrane as a helical span at residues 34-54 (VFLPVFYTAVFLTGVLGNLVL). Over 55-69 (MGALHFKPGSRRLID) the chain is Cytoplasmic. Residues 70 to 90 (IFIINLAASDFIFLVTLPLWV) traverse the membrane as a helical segment. At 91–120 (DKEASLGLWRTGSFLCKGSSYMISVNMHCS) the chain is on the extracellular side. The chain crosses the membrane as a helical span at residues 121 to 141 (VFLLTCMSVDRYLAIVCPVVS). The Cytoplasmic portion of the chain corresponds to 142-149 (RKFRRTDC). The helical transmembrane segment at 150–170 (AYVVCASIWFISCLLGLPTLL) threads the bilayer. Topologically, residues 171 to 192 (SRELTLIDDKPYCAEKKATPLK) are extracellular. The helical transmembrane segment at 193 to 213 (LIWSLVALIFTFFVPLLSIVT) threads the bilayer. Residues 214–239 (CYCCIARKLCAHYQQSGKHNKKLKKS) are Cytoplasmic-facing. Residues 240–260 (IKIIFIVVAAFLVSWLPFNTF) form a helical membrane-spanning segment. Over 261–284 (KLLAIVSGLQQERYFPSAMLQLGM) the chain is Extracellular. A helical transmembrane segment spans residues 285–305 (EVSGPLAFANSCVNPFIYYIF). Residues 306 to 360 (DSYIRRAIVHCLCPCLKNYDFGSSTETSDSHLTKALSTFIHAEDFTRRRKRSVSL) are Cytoplasmic-facing. Serine 359 carries the post-translational modification Phosphoserine.

The protein belongs to the G-protein coupled receptor 1 family. Interacts with adapter YWHAE; this interaction promotes ER-to-Golgi transport of GPR15. Phosphorylation is necessary for YWHAE binding and efficient surface expression. Post-translationally, O-glycosylated. Sialylated O-glycans in the N-terminal tail inhibits binding of GPR15LG. In terms of processing, sulfation is required for efficient binding of GPR15LG.

The protein resides in the cell membrane. G protein-coupled receptor that plays an important role in immune homeostasis. Acts via its natural ligand GPR15LG, a chemokine-like polypeptide strongly expressed in gastrointestinal tissues. GPR15-GPR15LG signaling axis regulates intestinal homeostasis and inflammation through the migration of immune cells. Controls thereby the specific homing of T-cells, particularly FOXP3+ regulatory T-cells (Tregs), to the large intestine lamina propria. Also required for skin localization of thymus-derived dendritic epidermal T-cells. Plays an important role in mediating cytoprotective function as well as angiogenesis of thrombomodulin. Mechanistically, preferentially signals through the Gi/o pathway to inhibit adenylate cyclase activity and activate a phosphatidylinositol-calcium second messenger system that regulates the release of Ca(2+) ions from intracellular stores. The sequence is that of G-protein coupled receptor 15 (GPR15) from Macaca mulatta (Rhesus macaque).